The chain runs to 151 residues: Ribonuclease H (151 aa).

The RNase H type-1 domain maps to 1 to 143 (MEEYVIYTDG…VDRVARKEAA (143 aa)). Mg(2+) contacts are provided by aspartate 9, glutamate 48, aspartate 71, and aspartate 135.

Belongs to the RNase H family. As to quaternary structure, monomer. It depends on Mg(2+) as a cofactor.

Its subcellular location is the cytoplasm. The catalysed reaction is Endonucleolytic cleavage to 5'-phosphomonoester.. Endonuclease that specifically degrades the RNA of RNA-DNA hybrids. The polypeptide is Ribonuclease H (Neorickettsia sennetsu (strain ATCC VR-367 / Miyayama) (Ehrlichia sennetsu)).